The following is a 245-amino-acid chain: 2,3-bisphosphoglycerate-dependent phosphoglycerate mutase (245 aa).

Substrate is bound by residues 8-15, 21-22, Arg-60, 87-90, Lys-98, 114-115, and 183-184; these read RHGQSLWN, TG, ERHY, RR, and GN. His-9 acts as the Tele-phosphohistidine intermediate in catalysis. The active-site Proton donor/acceptor is the Glu-87.

Belongs to the phosphoglycerate mutase family. BPG-dependent PGAM subfamily.

It carries out the reaction (2R)-2-phosphoglycerate = (2R)-3-phosphoglycerate. It functions in the pathway carbohydrate degradation; glycolysis; pyruvate from D-glyceraldehyde 3-phosphate: step 3/5. In terms of biological role, catalyzes the interconversion of 2-phosphoglycerate and 3-phosphoglycerate. The polypeptide is 2,3-bisphosphoglycerate-dependent phosphoglycerate mutase (Bacillus anthracis (strain A0248)).